The sequence spans 475 residues: Beta-amyrin 28-monooxygenase (475 aa).

Residues 2-22 (YLTILFLFVSSILLSLMFLLR) traverse the membrane as a helical segment. Cys422 contacts heme.

Belongs to the cytochrome P450 family. Requires heme as cofactor.

The protein resides in the membrane. The enzyme catalyses beta-amyrin + 3 reduced [NADPH--hemoprotein reductase] + 3 O2 = oleanolate + 3 oxidized [NADPH--hemoprotein reductase] + 4 H2O + 4 H(+). Functionally, catalyzes the oxidation of the methyl group to a carboxyl group at the C-28 position of beta-amyrin to form oleanolate. This chain is Beta-amyrin 28-monooxygenase, found in Barbarea vulgaris (Yellow rocket).